The following is a 614-amino-acid chain: Probable glutamate--tRNA ligase, cytoplasmic (614 aa).

130–132 is an L-glutamate binding site; sequence RFA. The 'HIGH' region signature appears at 135–144; that stretch reads PSGCLHIGHL. His-140 provides a ligand contact to ATP. L-glutamate contacts are provided by residues Asp-166, 303 to 307, and Arg-321; that span reads YDFVC. Residues Glu-324 and 359 to 363 contribute to the ATP site; that span reads VLSKR. The short motif at 359–363 is the 'KMSKS' region element; it reads VLSKR.

This sequence belongs to the class-I aminoacyl-tRNA synthetase family. Glutamate--tRNA ligase type 2 subfamily.

It is found in the cytoplasm. The enzyme catalyses tRNA(Glu) + L-glutamate + ATP = L-glutamyl-tRNA(Glu) + AMP + diphosphate. The sequence is that of Probable glutamate--tRNA ligase, cytoplasmic from Vairimorpha ceranae (strain BRL01) (Microsporidian parasite).